An 80-amino-acid polypeptide reads, in one-letter code: uncharacterized protein (80 aa).

Helical transmembrane passes span 2-22 (INLW…IGQV), 32-52 (FFGM…LTGG), and 55-75 (LVTG…RFMV).

The protein resides in the cell membrane. This is an uncharacterized protein from Escherichia coli (strain K12).